The following is a 100-amino-acid chain: Small ribosomal subunit protein uS14c (100 aa).

Belongs to the universal ribosomal protein uS14 family. As to quaternary structure, part of the 30S ribosomal subunit.

Its subcellular location is the plastid. It localises to the chloroplast. Its function is as follows. Binds 16S rRNA, required for the assembly of 30S particles. This is Small ribosomal subunit protein uS14c from Lactuca sativa (Garden lettuce).